The primary structure comprises 490 residues: Probable cytosol aminopeptidase (490 aa).

Mn(2+) contacts are provided by Lys-257 and Asp-262. Lys-269 is an active-site residue. Asp-281, Asp-341, and Glu-343 together coordinate Mn(2+). The active site involves Arg-345.

The protein belongs to the peptidase M17 family. Requires Mn(2+) as cofactor.

It is found in the cytoplasm. The catalysed reaction is Release of an N-terminal amino acid, Xaa-|-Yaa-, in which Xaa is preferably Leu, but may be other amino acids including Pro although not Arg or Lys, and Yaa may be Pro. Amino acid amides and methyl esters are also readily hydrolyzed, but rates on arylamides are exceedingly low.. It catalyses the reaction Release of an N-terminal amino acid, preferentially leucine, but not glutamic or aspartic acids.. Presumably involved in the processing and regular turnover of intracellular proteins. Catalyzes the removal of unsubstituted N-terminal amino acids from various peptides. The chain is Probable cytosol aminopeptidase from Prochlorococcus marinus (strain AS9601).